Reading from the N-terminus, the 1342-residue chain is DNA-directed RNA polymerase subunit beta (1342 aa).

Belongs to the RNA polymerase beta chain family. The RNAP catalytic core consists of 2 alpha, 1 beta, 1 beta' and 1 omega subunit. When a sigma factor is associated with the core the holoenzyme is formed, which can initiate transcription.

The catalysed reaction is RNA(n) + a ribonucleoside 5'-triphosphate = RNA(n+1) + diphosphate. In terms of biological role, DNA-dependent RNA polymerase catalyzes the transcription of DNA into RNA using the four ribonucleoside triphosphates as substrates. The sequence is that of DNA-directed RNA polymerase subunit beta from Klebsiella pneumoniae (strain 342).